A 432-amino-acid chain; its full sequence is Enolase (432 aa).

Q163 serves as a coordination point for (2R)-2-phosphoglycerate. E205 acts as the Proton donor in catalysis. Mg(2+) is bound by residues D242, E289, and D316. (2R)-2-phosphoglycerate-binding residues include K341, R370, S371, and K392. The active-site Proton acceptor is the K341.

Belongs to the enolase family. Mg(2+) serves as cofactor. Probably phosphorylated.

The protein resides in the cytoplasm. Its subcellular location is the secreted. The protein localises to the cell surface. The catalysed reaction is (2R)-2-phosphoglycerate = phosphoenolpyruvate + H2O. Its pathway is carbohydrate degradation; glycolysis; pyruvate from D-glyceraldehyde 3-phosphate: step 4/5. Functionally, catalyzes the reversible conversion of 2-phosphoglycerate (2-PG) into phosphoenolpyruvate (PEP). It is essential for the degradation of carbohydrates via glycolysis. 'Moonlights' as a plasminogen receptor. Binds plasminogen and human salivary mucin MG2 when expressed on the bacterial cell surface, potentially allowing the bacterium to acquire surface-associated proteolytic activity that may help the dissemination through oral tissues and entrance into the blood stream. This chain is Enolase, found in Streptococcus mutans serotype c (strain ATCC 700610 / UA159).